A 208-amino-acid polypeptide reads, in one-letter code: FMN-dependent NADH:quinone oxidoreductase (208 aa).

Position 99-102 (99-102 (MWNF)) interacts with FMN.

The protein belongs to the azoreductase type 1 family. In terms of assembly, homodimer. FMN serves as cofactor.

It carries out the reaction 2 a quinone + NADH + H(+) = 2 a 1,4-benzosemiquinone + NAD(+). The catalysed reaction is N,N-dimethyl-1,4-phenylenediamine + anthranilate + 2 NAD(+) = 2-(4-dimethylaminophenyl)diazenylbenzoate + 2 NADH + 2 H(+). Its function is as follows. Quinone reductase that provides resistance to thiol-specific stress caused by electrophilic quinones. Also exhibits azoreductase activity. Catalyzes the reductive cleavage of the azo bond in aromatic azo compounds to the corresponding amines. The chain is FMN-dependent NADH:quinone oxidoreductase from Brevibacillus brevis (strain 47 / JCM 6285 / NBRC 100599).